A 168-amino-acid polypeptide reads, in one-letter code: Lipoprotein signal peptidase (168 aa).

Helical transmembrane passes span 12–32 (WYWVVVVVFLADQLSKQWVLA), 67–87 (WQRWLFTAVAVGFSVLLTIWL), and 93–113 (NMVRLNLAYTLVIGGALGNLI). Catalysis depends on residues D123 and D141. The chain crosses the membrane as a helical span at residues 136–156 (AFNIADAAIFIGAVLIIIDSF).

The protein belongs to the peptidase A8 family.

Its subcellular location is the cell inner membrane. It catalyses the reaction Release of signal peptides from bacterial membrane prolipoproteins. Hydrolyzes -Xaa-Yaa-Zaa-|-(S,diacylglyceryl)Cys-, in which Xaa is hydrophobic (preferably Leu), and Yaa (Ala or Ser) and Zaa (Gly or Ala) have small, neutral side chains.. It participates in protein modification; lipoprotein biosynthesis (signal peptide cleavage). Functionally, this protein specifically catalyzes the removal of signal peptides from prolipoproteins. The sequence is that of Lipoprotein signal peptidase from Shewanella amazonensis (strain ATCC BAA-1098 / SB2B).